The chain runs to 418 residues: 3-isopropylmalate dehydratase large subunit (418 aa).

Residues Cys299, Cys359, and Cys362 each contribute to the [4Fe-4S] cluster site.

It belongs to the aconitase/IPM isomerase family. LeuC type 2 subfamily. In terms of assembly, heterodimer of LeuC and LeuD. Requires [4Fe-4S] cluster as cofactor.

The enzyme catalyses (2R,3S)-3-isopropylmalate = (2S)-2-isopropylmalate. It functions in the pathway amino-acid biosynthesis; L-leucine biosynthesis; L-leucine from 3-methyl-2-oxobutanoate: step 2/4. Catalyzes the isomerization between 2-isopropylmalate and 3-isopropylmalate, via the formation of 2-isopropylmaleate. The sequence is that of 3-isopropylmalate dehydratase large subunit from Nitratidesulfovibrio vulgaris (strain DSM 19637 / Miyazaki F) (Desulfovibrio vulgaris).